A 273-amino-acid polypeptide reads, in one-letter code: Proteasome subunit beta type-10 (273 aa).

Residue Met1 is modified to N-acetylmethionine. A propeptide spans 1-39 (MLKQAVEPTGGFSFENCQRNASLEHVLPGLRVPHARKTG) (removed in mature form). Thr40 functions as the Nucleophile in the catalytic mechanism.

This sequence belongs to the peptidase T1B family. The 26S proteasome consists of a 20S proteasome core and two 19S regulatory subunits. The 20S proteasome core is composed of 28 subunits that are arranged in four stacked rings, resulting in a barrel-shaped structure. The two end rings are each formed by seven alpha subunits, and the two central rings are each formed by seven beta subunits. The catalytic chamber with the active sites is on the inside of the barrel. Component of the immunoproteasome, where it displaces the equivalent housekeeping subunit PSMB7. Component of the spermatoproteasome, a form of the proteasome specifically found in testis. In terms of processing, autocleaved. The resulting N-terminal Thr residue of the mature subunit is responsible for the nucleophile proteolytic activity. Detected in liver (at protein level).

The protein resides in the cytoplasm. It localises to the nucleus. The enzyme catalyses Cleavage of peptide bonds with very broad specificity.. Its function is as follows. The proteasome is a multicatalytic proteinase complex which is characterized by its ability to cleave peptides with Arg, Phe, Tyr, Leu, and Glu adjacent to the leaving group at neutral or slightly basic pH. The proteasome has an ATP-dependent proteolytic activity. This subunit is involved in antigen processing to generate class I binding peptides. Plays a role in determining the T-cell repertoire for an antiviral T-cell response. The chain is Proteasome subunit beta type-10 (Psmb10) from Mus musculus (Mouse).